Here is a 100-residue protein sequence, read N- to C-terminus: MTLTKADLADLLFEQVGLNKREAKDMVEAFFEEIRMALEAGDSVKLSGFGNFELRQKSERPGRNPKTGEEIPITARRVVTFHASQKLKSKVEEAYAGAST.

The protein belongs to the bacterial histone-like protein family. Heterodimer of an alpha and a beta chain.

In terms of biological role, this protein is one of the two subunits of integration host factor, a specific DNA-binding protein that functions in genetic recombination as well as in transcriptional and translational control. The chain is Integration host factor subunit alpha from Methylobacillus flagellatus (strain ATCC 51484 / DSM 6875 / VKM B-1610 / KT).